Consider the following 363-residue polypeptide: Ribosome-binding ATPase YchF (363 aa).

The OBG-type G domain maps to 3–256 (FKCGIVGLPN…LDDDEKIEFL (254 aa)). 12 to 17 (NVGKST) is an ATP binding site. S16 and T36 together coordinate Mg(2+). In terms of domain architecture, TGS spans 278 to 361 (NLQTYFTAGV…QDGDVMHFRF (84 aa)).

Belongs to the TRAFAC class OBG-HflX-like GTPase superfamily. OBG GTPase family. YchF/OLA1 subfamily. The cofactor is Mg(2+).

In terms of biological role, ATPase that binds to both the 70S ribosome and the 50S ribosomal subunit in a nucleotide-independent manner. In Pasteurella multocida (strain Pm70), this protein is Ribosome-binding ATPase YchF.